An 87-amino-acid polypeptide reads, in one-letter code: Translation initiation factor IF-1 1 (87 aa).

The S1-like domain occupies 1–72; it reads MAKEELLELD…TKGRINFRHK (72 aa). The segment at 68–87 is disordered; that stretch reads NFRHKDANSPRPPRTGQPRR. Residues 77-87 are compositionally biased toward pro residues; the sequence is PRPPRTGQPRR.

It belongs to the IF-1 family. In terms of assembly, component of the 30S ribosomal translation pre-initiation complex which assembles on the 30S ribosome in the order IF-2 and IF-3, IF-1 and N-formylmethionyl-tRNA(fMet); mRNA recruitment can occur at any time during PIC assembly.

It is found in the cytoplasm. One of the essential components for the initiation of protein synthesis. Stabilizes the binding of IF-2 and IF-3 on the 30S subunit to which N-formylmethionyl-tRNA(fMet) subsequently binds. Helps modulate mRNA selection, yielding the 30S pre-initiation complex (PIC). Upon addition of the 50S ribosomal subunit IF-1, IF-2 and IF-3 are released leaving the mature 70S translation initiation complex. The polypeptide is Translation initiation factor IF-1 1 (Burkholderia lata (strain ATCC 17760 / DSM 23089 / LMG 22485 / NCIMB 9086 / R18194 / 383)).